Reading from the N-terminus, the 543-residue chain is Malate synthase (543 aa).

It belongs to the malate synthase family. Homodimer.

Its subcellular location is the cytoplasm. The enzyme catalyses glyoxylate + acetyl-CoA + H2O = (S)-malate + CoA + H(+). It functions in the pathway carbohydrate metabolism; glyoxylate cycle; (S)-malate from isocitrate: step 2/2. This chain is Malate synthase (aceB), found in Streptomyces arenae.